The sequence spans 277 residues: Large ribosomal subunit protein uL2 (277 aa).

The segment at 225-277 (AMNPVDHPHGGGEGKTSGGRHPVSPWGRPEGKTRRANKPSDRFIIRRKSRKRR) is disordered. A compositionally biased stretch (basic and acidic residues) spans 253-268 (PEGKTRRANKPSDRFI).

The protein belongs to the universal ribosomal protein uL2 family. Part of the 50S ribosomal subunit. Forms a bridge to the 30S subunit in the 70S ribosome.

In terms of biological role, one of the primary rRNA binding proteins. Required for association of the 30S and 50S subunits to form the 70S ribosome, for tRNA binding and peptide bond formation. It has been suggested to have peptidyltransferase activity; this is somewhat controversial. Makes several contacts with the 16S rRNA in the 70S ribosome. This chain is Large ribosomal subunit protein uL2, found in Tropheryma whipplei (strain TW08/27) (Whipple's bacillus).